Reading from the N-terminus, the 766-residue chain is Probable beta-glucosidase K (766 aa).

N19 carries N-linked (GlcNAc...) asparagine glycosylation. D196 is a catalytic residue. N-linked (GlcNAc...) asparagine glycans are attached at residues N288, N453, and N748. A PA14 domain is found at 369–528 (EGQPGLGMRF…DPERAIARAV (160 aa)). Positions 726–766 (LGRRGRSGSSPAVYRGRSNNVVNRTSHQGAQRISKGGFAAR) are disordered. The segment covering 742-756 (RSNNVVNRTSHQGAQ) has biased composition (polar residues).

This sequence belongs to the glycosyl hydrolase 3 family.

Its subcellular location is the secreted. It carries out the reaction Hydrolysis of terminal, non-reducing beta-D-glucosyl residues with release of beta-D-glucose.. Its pathway is glycan metabolism; cellulose degradation. Its function is as follows. Beta-glucosidases are one of a number of cellulolytic enzymes involved in the degradation of cellulosic biomass. Catalyzes the last step releasing glucose from the inhibitory cellobiose. In Aspergillus fumigatus (strain CBS 144.89 / FGSC A1163 / CEA10) (Neosartorya fumigata), this protein is Probable beta-glucosidase K (bglK).